A 471-amino-acid polypeptide reads, in one-letter code: 3-isopropylmalate dehydratase large subunit (471 aa).

3 residues coordinate [4Fe-4S] cluster: C347, C407, and C410.

The protein belongs to the aconitase/IPM isomerase family. LeuC type 1 subfamily. Heterodimer of LeuC and LeuD. [4Fe-4S] cluster is required as a cofactor.

The catalysed reaction is (2R,3S)-3-isopropylmalate = (2S)-2-isopropylmalate. Its pathway is amino-acid biosynthesis; L-leucine biosynthesis; L-leucine from 3-methyl-2-oxobutanoate: step 2/4. Catalyzes the isomerization between 2-isopropylmalate and 3-isopropylmalate, via the formation of 2-isopropylmaleate. The sequence is that of 3-isopropylmalate dehydratase large subunit from Prochlorococcus marinus (strain MIT 9211).